Here is a 350-residue protein sequence, read N- to C-terminus: Probable nicotinate-nucleotide adenylyltransferase/Ap4A hydrolase (350 aa).

The naMN adenylyltransferase stretch occupies residues 1 to 187 (MKQKIIIFGG…YINTNHLYLI (187 aa)). Positions 196 to 350 (DKRFQHCLRV…LKYVQNLVKD (155 aa)) are ap4A hydrolase. One can recognise an HD domain in the interval 198–310 (RFQHCLRVGK…VYLADKLEPN (113 aa)). Residue H201 coordinates ADP. Positions 201, 230, and 231 each coordinate Fe cation. ADP-binding positions include 231-234 (DLAK), H261, 287-288 (HT), D305, and R311. Fe cation is bound at residue D305.

This sequence in the N-terminal section; belongs to the NadD family. In the C-terminal section; belongs to the Ap4A hydrolase YqeK family.

The catalysed reaction is nicotinate beta-D-ribonucleotide + ATP + H(+) = deamido-NAD(+) + diphosphate. It catalyses the reaction P(1),P(4)-bis(5'-adenosyl) tetraphosphate + H2O = 2 ADP + 2 H(+). It participates in cofactor biosynthesis; NAD(+) biosynthesis; deamido-NAD(+) from nicotinate D-ribonucleotide: step 1/1. Catalyzes the reversible adenylation of nicotinate mononucleotide (NaMN) to nicotinic acid adenine dinucleotide (NaAD). Functionally, hydrolyzes diadenosine 5',5'''-P1,P4-tetraphosphate (Ap4A) to yield ADP. The polypeptide is Probable nicotinate-nucleotide adenylyltransferase/Ap4A hydrolase (Mycoplasma genitalium (strain ATCC 33530 / DSM 19775 / NCTC 10195 / G37) (Mycoplasmoides genitalium)).